Consider the following 710-residue polypeptide: FAST kinase domain-containing protein 2, mitochondrial (710 aa).

Residues Ser126 and Ser140 each carry the phosphoserine modification. In terms of domain architecture, RAP spans 634 to 691; that stretch reads VAVLCVSRSAYCLGSSHPRGFLAMKMRHLNAMGFHVILVNNWEMDKLEMEDAVTFLKT. A Phosphoserine modification is found at Ser708.

Belongs to the FAST kinase family. In terms of assembly, monomer. Found in a complex with GRSF1, DDX28, DHX30 and FASTKD5. Associates with the 16S mitochondrial rRNA (16S mt-rRNA). Forms a regulatory protein-RNA complex, consisting of RCC1L, NGRN, RPUSD3, RPUSD4, TRUB2, FASTKD2 and 16S mt-rRNA. Expression detected in spleen, thymus, testis, ovary, colon, heart, smooth muscle, kidney, brain, lung, liver and white adipose tissue with highest expression in heart, smooth muscle and thyroid.

It localises to the mitochondrion matrix. The protein localises to the mitochondrion nucleoid. In terms of biological role, plays an important role in assembly of the mitochondrial large ribosomal subunit. As a component of a functional protein-RNA module, consisting of RCC1L, NGRN, RPUSD3, RPUSD4, TRUB2, FASTKD2 and 16S mitochondrial ribosomal RNA (16S mt-rRNA), controls 16S mt-rRNA abundance and is required for intra-mitochondrial translation. May play a role in mitochondrial apoptosis. This chain is FAST kinase domain-containing protein 2, mitochondrial, found in Homo sapiens (Human).